We begin with the raw amino-acid sequence, 208 residues long: Uracil phosphoribosyltransferase (208 aa).

5-phospho-alpha-D-ribose 1-diphosphate is bound by residues R78, R103, and 130-138 (DPMLATGGS). Uracil contacts are provided by residues I193 and 198–200 (GDA). 5-phospho-alpha-D-ribose 1-diphosphate is bound at residue D199.

Belongs to the UPRTase family. Requires Mg(2+) as cofactor.

The catalysed reaction is UMP + diphosphate = 5-phospho-alpha-D-ribose 1-diphosphate + uracil. It functions in the pathway pyrimidine metabolism; UMP biosynthesis via salvage pathway; UMP from uracil: step 1/1. With respect to regulation, allosterically activated by GTP. Functionally, catalyzes the conversion of uracil and 5-phospho-alpha-D-ribose 1-diphosphate (PRPP) to UMP and diphosphate. This Klebsiella pneumoniae subsp. pneumoniae (strain ATCC 700721 / MGH 78578) protein is Uracil phosphoribosyltransferase.